Reading from the N-terminus, the 548-residue chain is Alpha-1,3-mannosyl-glycoprotein 4-beta-N-acetylglucosaminyltransferase B (548 aa).

Residues methionine 1–threonine 7 lie on the Cytoplasmic side of the membrane. The helical; Signal-anchor for type II membrane protein transmembrane segment at phenylalanine 8–leucine 28 threads the bilayer. Topologically, residues serine 29–aspartate 548 are lumenal. The stretch at valine 36–aspartate 83 forms a coiled coil. 2 N-linked (GlcNAc...) asparagine glycosylation sites follow: asparagine 87 and asparagine 103.

It belongs to the glycosyltransferase 54 family. In terms of assembly, interacts with SLC35A3. A divalent metal cation serves as cofactor. In terms of processing, N-glycosylated.

It is found in the golgi apparatus membrane. The catalysed reaction is N(4)-{beta-D-GlcNAc-(1-&gt;2)-alpha-D-Man-(1-&gt;3)-[beta-D-GlcNAc-(1-&gt;2)-alpha-D-Man-(1-&gt;6)]-beta-D-Man-(1-&gt;4)-beta-D-GlcNAc-(1-&gt;4)-beta-D-GlcNAc}-L-asparaginyl-[protein] + UDP-N-acetyl-alpha-D-glucosamine = N(4)-{beta-D-GlcNAc-(1-&gt;2)-[beta-D-GlcNAc-(1-&gt;4)]-alpha-D-Man-(1-&gt;3)-[beta-D-GlcNAc-(1-&gt;2)-alpha-D-Man-(1-&gt;6)]-beta-D-Man-(1-&gt;4)-beta-D-GlcNAc-(1-&gt;4)-beta-D-GlcNAc}-L-asparaginyl-[protein] + UDP + H(+). The enzyme catalyses an N(4)-{beta-D-GlcNAc-(1-&gt;2)-alpha-D-Man-(1-&gt;3)-[alpha-D-Man-(1-&gt;6)]-beta-D-Man-(1-&gt;4)-beta-D-GlcNAc-(1-&gt;4)-beta-D-GlcNAc}-L-asparaginyl-[protein] + UDP-N-acetyl-alpha-D-glucosamine = an N(4)-{beta-D-GlcNAc-(1-&gt;2)-[beta-D-GlcNAc-(1-&gt;4)]-alpha-D-Man-(1-&gt;3)-[alpha-D-Man-(1-&gt;6)]-beta-D-Man-(1-&gt;4)-beta-D-GlcNAc-(1-&gt;4)-beta-D-GlcNAc}-L-asparaginyl-[protein] + UDP + H(+). It carries out the reaction an N(4)-{beta-D-GlcNAc-(1-&gt;2)-alpha-D-Man-(1-&gt;3)-[beta-D-GlcNAc-(1-&gt;2)-[beta-D-GlcNAc-(1-&gt;6)]-alpha-D-Man-(1-&gt;6)]-beta-D-Man-(1-&gt;4)-beta-D-GlcNAc-(1-&gt;4)-beta-D-GlcNAc}-L-asparaginyl-[protein] + UDP-N-acetyl-alpha-D-glucosamine = an N(4)-{beta-D-GlcNAc-(1-&gt;2)-[beta-D-GlcNAc-(1-&gt;4)]-alpha-D-Man-(1-&gt;3)-[beta-D-GlcNAc-(1-&gt;2)-[beta-D-GlcNAc-(1-&gt;6)]-alpha-D-Man-(1-&gt;6)]-beta-D-Man-(1-&gt;4)-beta-D-GlcNAc-(1-&gt;4)-beta-D-GlcNAc}-L-asparaginyl-[protein] + UDP + H(+). It catalyses the reaction an N(4)-{beta-D-GlcNAc-(1-&gt;2)-alpha-D-Man-(1-&gt;3)-[beta-D-GlcNAc-(1-&gt;2)-alpha-D-Man-(1-&gt;6)]-beta-D-Man-(1-&gt;4)-beta-D-GlcNAc-(1-&gt;4)-[alpha-L-Fuc-(1-&gt;6)]-beta-D-GlcNAc}-L-asparaginyl-[protein] + UDP-N-acetyl-alpha-D-glucosamine = N(4)-{beta-D-GlcNAc-(1-&gt;2)-[beta-D-GlcNAc-(1-&gt;4)]-alpha-D-Man-(1-&gt;3)-[beta-D-GlcNAc-(1-&gt;2)-alpha-D-Man-(1-&gt;6)]-beta-D-Man-(1-&gt;4)-beta-D-GlcNAc-(1-&gt;4)-[alpha-L-Fuc-(1-&gt;6)]-beta-D-GlcNAc}-asparaginyl-[protein] + UDP + H(+). The catalysed reaction is an N(4)-{beta-D-GlcNAc-(1-&gt;2)-alpha-D-Man-(1-&gt;3)-[beta-D-Gal-(1-&gt;4)-beta-D-GlcNAc-(1-&gt;2)-alpha-D-Man-(1-&gt;6)]-beta-D-Man-(1-&gt;4)-beta-D-GlcNAc-(1-&gt;4)-beta-D-GlcNAc}-L-asparaginyl-[protein] + UDP-N-acetyl-alpha-D-glucosamine = an N(4)-{beta-D-GlcNAc-(1-&gt;2)-[beta-D-GlcNAc-(1-&gt;4)]-alpha-D-Man-(1-&gt;3)-[beta-D-Gal-(1-&gt;4)-beta-D-GlcNAc-(1-&gt;2)-alpha-D-Man-(1-&gt;6)]-beta-D-Man-(1-&gt;4)-beta-D-GlcNAc-(1-&gt;4)-beta-D-GlcNAc}-L-asparaginyl-[protein] + UDP + H(+). The enzyme catalyses N(4)-{beta-D-GlcNAc-(1-&gt;2)-alpha-D-Man-(1-&gt;3)-[alpha-D-Man-(1-&gt;3)-{alpha-D-Man-(1-&gt;6)}-alpha-D-Man-(1-&gt;6)]-beta-D-Man-(1-&gt;4)-beta-D-GlcNAc-(1-&gt;4)-beta-D-GlcNAc}-asparaginyl-[protein] + UDP-N-acetyl-alpha-D-glucosamine = N(4)-{beta-D-GlcNAc-(1-&gt;2)-[beta-D-GlcNAc-(1-&gt;4)]-alpha-D-Man-(1-&gt;3)-[alpha-D-Man-(1-&gt;3)-{alpha-D-Man-(1-&gt;6)}-alpha-D-Man-(1-&gt;6)]-beta-D-Man-(1-&gt;4)-beta-D-GlcNAc-(1-&gt;4)-beta-D-GlcNAc}-asparaginyl-[protein] + UDP + H(+). It carries out the reaction N(4)-{beta-D-GlcNAc-(1-&gt;2)-alpha-D-Man-(1-&gt;3)-beta-D-Man-(1-&gt;4)-beta-D-GlcNAc-(1-&gt;4)-beta-D-GlcNAc}-asparaginyl-[protein] + UDP-N-acetyl-alpha-D-glucosamine = N(4)-{beta-D-GlcNAc-(1-&gt;2)-[beta-D-GlcNAc-(1-&gt;4)]-alpha-D-Man-(1-&gt;3)-beta-D-Man-(1-&gt;4)-beta-D-GlcNAc-(1-&gt;4)-beta-D-GlcNAc}-asparaginyl-[protein] + UDP + H(+). It participates in protein modification; protein glycosylation. Its function is as follows. Glycosyltransferase that catalyzes the transfer of GlcNAc from UDP-GlcNAc to the GlcNAcbeta1-2Manalpha1-3 arm of the core structure of N-linked glycans through a beta1-4 linkage and participates in the production of tri- and tetra-antennary N-linked sugar chains. Prefers complex-type N-glycans over hybrid-types. Has lower affinities for donors or acceptors than MGAT4A, suggesting that, under physiological conditions, it is not the main contributor in N-glycan biosynthesis. The polypeptide is Alpha-1,3-mannosyl-glycoprotein 4-beta-N-acetylglucosaminyltransferase B (Mus musculus (Mouse)).